A 284-amino-acid chain; its full sequence is Bifunctional protein FolD (284 aa).

NADP(+) is bound by residues 166–168 (GAS) and isoleucine 232.

Belongs to the tetrahydrofolate dehydrogenase/cyclohydrolase family. As to quaternary structure, homodimer.

The catalysed reaction is (6R)-5,10-methylene-5,6,7,8-tetrahydrofolate + NADP(+) = (6R)-5,10-methenyltetrahydrofolate + NADPH. It carries out the reaction (6R)-5,10-methenyltetrahydrofolate + H2O = (6R)-10-formyltetrahydrofolate + H(+). It functions in the pathway one-carbon metabolism; tetrahydrofolate interconversion. Catalyzes the oxidation of 5,10-methylenetetrahydrofolate to 5,10-methenyltetrahydrofolate and then the hydrolysis of 5,10-methenyltetrahydrofolate to 10-formyltetrahydrofolate. This chain is Bifunctional protein FolD, found in Shewanella sp. (strain ANA-3).